Consider the following 307-residue polypeptide: Mitochondrial 2-oxodicarboxylate carrier 2 (307 aa).

6 helical membrane passes run 10–30 (LPFIYQFISGAVAGISELTVM), 76–95 (SRLYRGISSPMLMEAPKRAT), 122–142 (IAAGASAGMTEAAVIVPFELI), 171–191 (GLYKGIESTMWRNALWNGGYF), 215–235 (LIAGAIGGTVGTMLNTPFDVV), and 280–300 (CRLAPGGSLMLVVFTGMMNFF). 3 Solcar repeats span residues 10-106 (LPFI…YQKI), 116-200 (TTQK…VRNS), and 209-299 (QKTR…MMNF).

Belongs to the mitochondrial carrier (TC 2.A.29) family.

Its subcellular location is the mitochondrion inner membrane. In terms of biological role, transports C5-C7 oxodicarboxylates across the inner membranes of mitochondria. Can transport 2-oxoadipate, 2-oxoglutarate, adipate, glutarate, 2-oxopimelate, oxaloacetate, citrate and malate. The main physiological role is probably to supply 2-oxoadipate and 2-oxoglutarate from the mitochondrial matrix to the cytosol where they are used in the biosynthesis of lysine and glutamate, respectively, and in lysine catabolism. In Saccharomyces cerevisiae (strain ATCC 204508 / S288c) (Baker's yeast), this protein is Mitochondrial 2-oxodicarboxylate carrier 2 (ODC2).